Consider the following 274-residue polypeptide: Methylamine utilization protein MauF (274 aa).

Transmembrane regions (helical) follow at residues 30-50, 52-72, 105-125, 127-147, 176-196, 202-222, and 253-273; these read WTRA…ALAM, AAHV…LSTW, LGYA…GGIA, LSGF…LAYG, WVVG…YVQT, VTAA…IAIF, and AAIA…MLAL.

Its subcellular location is the cell membrane. It participates in one-carbon metabolism; methylamine degradation. The protein is Methylamine utilization protein MauF (mauF) of Paracoccus versutus (Thiobacillus versutus).